The primary structure comprises 122 residues: Small ribosomal subunit protein uS13 (122 aa).

The segment at 94–122 (KQLPVRGQRTHTNARTRKGKAKPIAGKKK) is disordered.

The protein belongs to the universal ribosomal protein uS13 family. Part of the 30S ribosomal subunit. Forms a loose heterodimer with protein S19. Forms two bridges to the 50S subunit in the 70S ribosome.

Its function is as follows. Located at the top of the head of the 30S subunit, it contacts several helices of the 16S rRNA. In the 70S ribosome it contacts the 23S rRNA (bridge B1a) and protein L5 of the 50S subunit (bridge B1b), connecting the 2 subunits; these bridges are implicated in subunit movement. Contacts the tRNAs in the A and P-sites. The chain is Small ribosomal subunit protein uS13 from Methylorubrum extorquens (strain PA1) (Methylobacterium extorquens).